Reading from the N-terminus, the 309-residue chain is tRNA dimethylallyltransferase (309 aa).

13–20 (GPTAVGKS) contributes to the ATP binding site. A substrate-binding site is contributed by 15-20 (TAVGKS).

It belongs to the IPP transferase family. As to quaternary structure, monomer. Mg(2+) serves as cofactor.

The catalysed reaction is adenosine(37) in tRNA + dimethylallyl diphosphate = N(6)-dimethylallyladenosine(37) in tRNA + diphosphate. Catalyzes the transfer of a dimethylallyl group onto the adenine at position 37 in tRNAs that read codons beginning with uridine, leading to the formation of N6-(dimethylallyl)adenosine (i(6)A). The polypeptide is tRNA dimethylallyltransferase (Lacticaseibacillus paracasei (strain ATCC 334 / BCRC 17002 / CCUG 31169 / CIP 107868 / KCTC 3260 / NRRL B-441) (Lactobacillus paracasei)).